Reading from the N-terminus, the 1849-residue chain is TATA-binding protein-associated factor 172 (1849 aa).

The tract at residues 77–97 (NPVPRTRQEPTSESSMEDSPT) is disordered. The span at 85 to 97 (EPTSESSMEDSPT) shows a compositional bias: polar residues. 2 positions are modified to phosphoserine: Ser91 and Ser95. A Nuclear localization signal motif is present at residues 191-207 (QAAELIDSEFRAGMSNR). Positions 219-247 (FAKQRSRDAVETNEKSNDSTDGEPEEKRR) are disordered. The segment covering 223–236 (RSRDAVETNEKSND) has biased composition (basic and acidic residues). HEAT repeat units follow at residues 385–422 (TGVH…VRQD), 426–463 (TLLP…SLVY), 513–550 (QSLT…TQDQ), 554–596 (SWLI…KASV), 818–855 (TSSF…LQLR), 872–910 (EKLN…QCTT), 1102–1139 (PLLV…IATM), and 1182–1219 (PYIV…LMPL). The 176-residue stretch at 1278–1453 (AFLNKYKLHG…WSLFDFLMPG (176 aa)) folds into the Helicase ATP-binding domain. 1291 to 1298 (DDMGLGKT) provides a ligand contact to ATP. The short motif at 1404–1407 (DEGH) is the DEGH box element. In terms of domain architecture, Helicase C-terminal spans 1636–1790 (SGTESVVAQH…QENSSLQSMG (155 aa)).

It belongs to the SNF2/RAD54 helicase family. As to quaternary structure, associates with TBP to form B-TFIID. Binds DRAP1.

The protein resides in the nucleus. Functionally, regulates transcription in association with TATA binding protein (TBP). Removes TBP from the TATA box in an ATP-dependent manner. This is TATA-binding protein-associated factor 172 (BTAF1) from Homo sapiens (Human).